A 382-amino-acid polypeptide reads, in one-letter code: Sphingoid long-chain base transporter RSB1 (382 aa).

Residues Met1–Arg34 lie on the Extracellular side of the membrane. Residues Asn3 and Asn6 are each glycosylated (N-linked (GlcNAc...) asparagine). A helical membrane pass occupies residues Phe35 to Leu55. Residues Met56–Arg57 are Cytoplasmic-facing. The helical transmembrane segment at Gln58–Gly78 threads the bilayer. Residues Arg79–Asp90 lie on the Extracellular side of the membrane. The helical transmembrane segment at Ala91 to Tyr111 threads the bilayer. The Cytoplasmic portion of the chain corresponds to Tyr112 to Ser135. The helical transmembrane segment at Phe136 to Cys156 threads the bilayer. Residues Gly157–His171 lie on the Extracellular side of the membrane. The helical transmembrane segment at Val172–Phe192 threads the bilayer. Residues His193–Arg241 lie on the Cytoplasmic side of the membrane. A helical membrane pass occupies residues Trp242–Cys262. Residues Cys263–Glu281 lie on the Extracellular side of the membrane. A helical membrane pass occupies residues Trp282–Phe302. The Cytoplasmic portion of the chain corresponds to His303–Leu382.

Belongs to the lipid-translocating exporter (LTE) (TC 9.A.26.1) family.

It is found in the cell membrane. Its function is as follows. Catalyzes the ATP-dependent translocation of sphingoid long-chain bases (LCBs) from the cytoplasmic site toward the extracytoplasmic side of the membrane (flip-flop). Involved in the establishment of the functional lipid asymmetry of the plasma membrane. Regulates intracellular levels of LCBs, sphingolipid precursors that are growth inhibitory at increased levels. The sequence is that of Sphingoid long-chain base transporter RSB1 (RSB1) from Saccharomyces cerevisiae (strain ATCC 204508 / S288c) (Baker's yeast).